A 692-amino-acid polypeptide reads, in one-letter code: Formate hydrogenlyase transcriptional activator FhlA (692 aa).

The region spanning 202–344 (DMDELVSEVA…QIAERVAIAV (143 aa)) is the GAF domain. The 230-residue stretch at 381–610 (IIGRSEAMYS…LENVIERAVL (230 aa)) folds into the Sigma-54 factor interaction domain. ATP contacts are provided by residues 409-416 (GETGTGKE) and 472-481 (ADKSSLFLDE). The segment at residues 663-682 (PKGAAQRLGLKRTTLLSRMK) is a DNA-binding region (H-T-H motif).

Functionally, required for induction of expression of the formate dehydrogenase H and hydrogenase-3 structural genes. Also activates expression of hyf operon (encodes the silent hydrogenase-4 gene cluster). The protein is Formate hydrogenlyase transcriptional activator FhlA (fhlA) of Escherichia coli (strain K12).